The primary structure comprises 477 residues: Serine/threonine-protein kinase pakC (477 aa).

One can recognise a PH domain in the interval 13 to 108 (SPDKEGELKK…WMKAVEKGSE (96 aa)). Positions 112-125 (VSQPFNLKHEVHVD) constitute a CRIB domain. The 255-residue stretch at 204 to 458 (YKNMTKIGEG…ATDLLKHPFM (255 aa)) folds into the Protein kinase domain. Residues 210 to 218 (IGEGAAGEV) and Lys233 contribute to the ATP site. Asp326 (proton acceptor) is an active-site residue.

This sequence belongs to the protein kinase superfamily. STE Ser/Thr protein kinase family. STE20 subfamily. In terms of assembly, interacts with GTP-bound racB. Mg(2+) is required as a cofactor.

Its subcellular location is the cytoplasm. It localises to the membrane. The catalysed reaction is L-seryl-[protein] + ATP = O-phospho-L-seryl-[protein] + ADP + H(+). The enzyme catalyses L-threonyl-[protein] + ATP = O-phospho-L-threonyl-[protein] + ADP + H(+). With respect to regulation, kinase activity is rapidly and transiently increased in response to chemoattractant stimulation. Its function is as follows. Has role in the regulation of chemotaxis. In Dictyostelium discoideum (Social amoeba), this protein is Serine/threonine-protein kinase pakC (pakC).